A 556-amino-acid chain; its full sequence is Formate--tetrahydrofolate ligase (556 aa).

65–72 (TPAGEGKT) contacts ATP.

The protein belongs to the formate--tetrahydrofolate ligase family.

The enzyme catalyses (6S)-5,6,7,8-tetrahydrofolate + formate + ATP = (6R)-10-formyltetrahydrofolate + ADP + phosphate. It participates in one-carbon metabolism; tetrahydrofolate interconversion. The chain is Formate--tetrahydrofolate ligase from Heliobacterium modesticaldum (strain ATCC 51547 / Ice1).